Here is a 437-residue protein sequence, read N- to C-terminus: MATFQSLPGFREFYPDALARRNHIFRLWRQTAVAFGFAEYDAPVLEPLELYKTKSGDEIEAQLFSFTDKGGREVALRPEMTPTVCRMVGAKANALKRPIKWFSIAEYYRYERAQKGRERAFFQFNADLFAEPGPEAEIELIALLTQCLKAFGLTEQDFYIRLSDRNLWFFYLEALGLDEPRIRAVLSAVDKFEKVGDDAFKPYAEQFGPLDLALKQRVLEFLQIKTLASLEQTLAPLGGEKLAARLGDWRKLLDGLAAMGLSPFIEVDLGVVRGLAYYTGFVFEAFDRKGELRAIAGGGRYNDLVKKLGGPDLPAVGFAIGDVTLGLLLDARGLMPAFVQASDVYCVIGGAAERQAAFADVNALRAAGFKVDYPLKDVPFGKQFKLAADSGAKLALIYGPDELAKNVVKLRDLTTRTETDVPREQVQAMVRDFFSTD.

The protein belongs to the class-II aminoacyl-tRNA synthetase family. Homodimer.

Its subcellular location is the cytoplasm. It carries out the reaction tRNA(His) + L-histidine + ATP = L-histidyl-tRNA(His) + AMP + diphosphate + H(+). The polypeptide is Histidine--tRNA ligase (Opitutus terrae (strain DSM 11246 / JCM 15787 / PB90-1)).